Reading from the N-terminus, the 304-residue chain is Type II methyltransferase M.HindV (304 aa).

One can recognise an SAM-dependent MTase C5-type domain in the interval 1–299 (MKCVDLFSGC…SAIINFEKEP (299 aa)). Residue Cys-75 is part of the active site.

It belongs to the class I-like SAM-binding methyltransferase superfamily. C5-methyltransferase family.

The catalysed reaction is a 2'-deoxycytidine in DNA + S-adenosyl-L-methionine = a 5-methyl-2'-deoxycytidine in DNA + S-adenosyl-L-homocysteine + H(+). Its function is as follows. A methylase, recognizes the double-stranded sequence 5'-GRCGYC-3', methylates C-? on both strands, and protects the DNA from cleavage by the HindV endonuclease. This Haemophilus influenzae (strain ATCC 51907 / DSM 11121 / KW20 / Rd) protein is Type II methyltransferase M.HindV (hindVM).